A 666-amino-acid chain; its full sequence is Heparin-sulfate lyase (666 aa).

The N-terminal stretch at 1–22 is a signal peptide; that stretch reads MNKTFKYIVLLALACFVGKANA. Tyrosine 301 serves as the catalytic Proton acceptor.

This sequence belongs to the polysaccharide lyase 12 family.

The protein resides in the periplasm. It catalyses the reaction Elimination of sulfate, appears to act on linkages between N-acetyl-D-glucosamine and uronate. Product is an unsaturated sugar.. Functionally, specifically cleaves heparan sulfate-rich regions of acidic polysaccharides. Also able to degrade heparin and hyaluronic acid. Does not act on N,O-desulfated glucosamine or N-acetyl-O-sulfated glucosamine linkages. Functions in cleaving metazoan heparan sulfate and providing carbon, nitrogen and sulfate sources for microorganisms. The chain is Heparin-sulfate lyase (hepC) from Bacteroides stercoris.